The chain runs to 395 residues: Tyrosine--tRNA ligase 2 (395 aa).

A 'HIGH' region motif is present at residues 42–51 (PTAPDIHLGH). Positions 226-230 (KMSKS) match the 'KMSKS' region motif. K229 serves as a coordination point for ATP. Residues 334–395 (TPMANLLKEA…KRKFARITIA (62 aa)) enclose the S4 RNA-binding domain.

It belongs to the class-I aminoacyl-tRNA synthetase family. TyrS type 2 subfamily. Homodimer.

Its subcellular location is the cytoplasm. It catalyses the reaction tRNA(Tyr) + L-tyrosine + ATP = L-tyrosyl-tRNA(Tyr) + AMP + diphosphate + H(+). Functionally, catalyzes the attachment of tyrosine to tRNA(Tyr) in a two-step reaction: tyrosine is first activated by ATP to form Tyr-AMP and then transferred to the acceptor end of tRNA(Tyr). In Vibrio vulnificus (strain CMCP6), this protein is Tyrosine--tRNA ligase 2.